The sequence spans 319 residues: HTH-type transcriptional regulator YidZ (319 aa).

The region spanning 8–65 (LDLNLLLCLQLLMQERSVTKAAKRMNVTPSAVSKSLAKLRAWFDDPLFVNSPLGLSPT) is the HTH lysR-type domain. A DNA-binding region (H-T-H motif) is located at residues 25–44 (VTKAAKRMNVTPSAVSKSLA).

This sequence belongs to the LysR transcriptional regulatory family.

Involved in anaerobic NO protection. This is HTH-type transcriptional regulator YidZ from Escherichia coli O157:H7 (strain EC4115 / EHEC).